We begin with the raw amino-acid sequence, 308 residues long: uncharacterized protein (308 aa).

The 67-residue stretch at 15–81 folds into the S4 RNA-binding domain; the sequence is MRVDTGLARL…QNTPIDIEGM (67 aa). Residue Asp139 is part of the active site.

This sequence belongs to the pseudouridine synthase RluA family.

The enzyme catalyses a uridine in RNA = a pseudouridine in RNA. This is an uncharacterized protein from Mycobacterium tuberculosis (strain CDC 1551 / Oshkosh).